We begin with the raw amino-acid sequence, 255 residues long: Enolase-phosphatase E1 (255 aa).

Mg(2+) is bound by residues Asp-22 and Glu-24. Residues 136-137 (SS) and Lys-173 contribute to the substrate site. Asp-199 is a Mg(2+) binding site.

This sequence belongs to the HAD-like hydrolase superfamily. MasA/MtnC family. As to quaternary structure, monomer. Mg(2+) is required as a cofactor.

Its subcellular location is the cytoplasm. It is found in the nucleus. It catalyses the reaction 5-methylsulfanyl-2,3-dioxopentyl phosphate + H2O = 1,2-dihydroxy-5-(methylsulfanyl)pent-1-en-3-one + phosphate. Its pathway is amino-acid biosynthesis; L-methionine biosynthesis via salvage pathway; L-methionine from S-methyl-5-thio-alpha-D-ribose 1-phosphate: step 3/6. It functions in the pathway amino-acid biosynthesis; L-methionine biosynthesis via salvage pathway; L-methionine from S-methyl-5-thio-alpha-D-ribose 1-phosphate: step 4/6. In terms of biological role, bifunctional enzyme that catalyzes the enolization of 2,3-diketo-5-methylthiopentyl-1-phosphate (DK-MTP-1-P) into the intermediate 2-hydroxy-3-keto-5-methylthiopentenyl-1-phosphate (HK-MTPenyl-1-P), which is then dephosphorylated to form the acireductone 1,2-dihydroxy-3-keto-5-methylthiopentene (DHK-MTPene). In Verticillium alfalfae (strain VaMs.102 / ATCC MYA-4576 / FGSC 10136) (Verticillium wilt of alfalfa), this protein is Enolase-phosphatase E1.